The following is a 139-amino-acid chain: GSK3B-interacting protein (139 aa).

The segment at 41-45 is required for PRKAR2A interaction; contributes to a protective effect against H(2)O(2)-induced apoptosis; the sequence is VNDVL. The segment at 115-139 is interaction with GSK3B and acts as a GSK3B inhibitor; that stretch reads SPAYREAFGNALLQRLEALKRDGQS.

It belongs to the GSKIP family. Forms a complex composed of PRKAR2A or PRKAR2B, GSK3B and GSKIP through GSKIP interaction; facilitates PKA-induced phosphorylation of GSK3B leading to GSK3B inactivation; recruits DNM1L through GSK3B for PKA-mediated phosphorylation of DNM1L; promotes beta-catenin degradation through GSK3B-induced phosphorylation of beta-catenin; stabilizes beta-catenin and enhances Wnt-induced signaling through PKA-induced phosphorylation of beta-catenin. Interacts with GSK3B; induces GSK3B-mediated phosphorylation of GSKIP and inhibits GSK3B kinase activity. Phosphorylated by GSK3B.

Its subcellular location is the cytoplasm. It localises to the nucleus. Its function is as follows. A-kinase anchoring protein for GSK3B and PKA that regulates or facilitates their kinase activity towards their targets. The ternary complex enhances Wnt-induced signaling by facilitating the GSK3B- and PKA-induced phosphorylation of beta-catenin leading to beta-catenin degradation and stabilization respectively. Upon cAMP activation, the ternary complex contributes to neuroprotection against oxidative stress-induced apoptosis by facilitating the PKA-induced phosphorylation of DML1 and PKA-induced inactivation of GSK3B. During neurite outgrowth promotes neuron proliferation; while increases beta-catenin-induced transcriptional activity through GSK3B kinase activity inhibition, reduces N-cadherin level to promote cell cycle progression. May play a role in cleft palate formation and is required for postnatal life through modulation of the activity of GSK3B during development. The sequence is that of GSK3B-interacting protein from Mus musculus (Mouse).